The primary structure comprises 486 residues: Ribulose bisphosphate carboxylase large chain, chromosomal (486 aa).

2 residues coordinate substrate: Asn-126 and Thr-176. Residue Lys-178 is the Proton acceptor of the active site. Lys-180 is a binding site for substrate. 3 residues coordinate Mg(2+): Lys-204, Asp-206, and Glu-207. Lys-204 carries the N6-carboxylysine modification. The active-site Proton acceptor is His-296. Arg-297, His-329, and Ser-381 together coordinate substrate.

This sequence belongs to the RuBisCO large chain family. Type I subfamily. As to quaternary structure, heterohexadecamer of 8 large chains and 8 small chains; disulfide-linked. The disulfide link is formed within the large subunit homodimers. Requires Mg(2+) as cofactor. In terms of processing, the disulfide bond which can form between Cys-278 in the large chain dimeric partners within the hexadecamer appears to be associated with oxidative stress and protein turnover.

The enzyme catalyses 2 (2R)-3-phosphoglycerate + 2 H(+) = D-ribulose 1,5-bisphosphate + CO2 + H2O. It carries out the reaction D-ribulose 1,5-bisphosphate + O2 = 2-phosphoglycolate + (2R)-3-phosphoglycerate + 2 H(+). Its function is as follows. RuBisCO catalyzes two reactions: the carboxylation of D-ribulose 1,5-bisphosphate, the primary event in carbon dioxide fixation, as well as the oxidative fragmentation of the pentose substrate. Both reactions occur simultaneously and in competition at the same active site. The chain is Ribulose bisphosphate carboxylase large chain, chromosomal (cbbL1) from Cupriavidus necator (strain ATCC 17699 / DSM 428 / KCTC 22496 / NCIMB 10442 / H16 / Stanier 337) (Ralstonia eutropha).